Reading from the N-terminus, the 152-residue chain is D-aminoacyl-tRNA deacylase (152 aa).

The short motif at 137 to 138 is the Gly-cisPro motif, important for rejection of L-amino acids element; it reads GP.

It belongs to the DTD family. Homodimer.

Its subcellular location is the cytoplasm. The enzyme catalyses glycyl-tRNA(Ala) + H2O = tRNA(Ala) + glycine + H(+). It carries out the reaction a D-aminoacyl-tRNA + H2O = a tRNA + a D-alpha-amino acid + H(+). In terms of biological role, an aminoacyl-tRNA editing enzyme that deacylates mischarged D-aminoacyl-tRNAs. Also deacylates mischarged glycyl-tRNA(Ala), protecting cells against glycine mischarging by AlaRS. Acts via tRNA-based rather than protein-based catalysis; rejects L-amino acids rather than detecting D-amino acids in the active site. By recycling D-aminoacyl-tRNA to D-amino acids and free tRNA molecules, this enzyme counteracts the toxicity associated with the formation of D-aminoacyl-tRNA entities in vivo and helps enforce protein L-homochirality. The sequence is that of D-aminoacyl-tRNA deacylase from Geobacillus sp. (strain WCH70).